The sequence spans 1506 residues: MTTVVVHVDSKAELTTLLEQWEKDHGSGQDMVPILTRMSELIEKETEEYRKGDPDPFDDRHPGRADPECMLGHLLRILFKNDDFMNALVNAYVMTSREPPLNTAACRLLLDIMPGLETAVVFQEKEGIVENLFKWAREADQPLRTYSTGLLGGAMENQDIAANYRDENSQLVAIVLRRLRELQLQEVALRQDSKRPSPRKLSSEPLLPLDEEAVDMDYGDMAVDVVDGEQESSRDMEISFRLDSSHKTSSRVNSATKPEEGGLKKNKSAKHGDRENFRKAKQKLGFSSSDPDRVFVELSNSSWSEMSPWVIGTNYTLYPMTPAIEQRLILQYLTPLGEYQELLPIFMQLGSRELMMFYIDLKQTNDVLLTFEALKHLASLLLHNKFATEFVAHGGVQKLLEIPRPSMAATGVSMCLYYLSYNQDAMERVCMHPHNVLSDVVNYTLWLMECSHASGCCHATMFFSICFSFRAVLELFDRYDGLRRLVNLISTLEILNLEDQGALLSDDEIFASRQTGKHTCMALRKYFEAHLAIKLEQVKQSLQRTEGGILVHPQPPYKACSYTHEQIVEMMEFLIEYGPAQLYWEPAEVFLKLSCVQLLLQLISIACNWKTYYARNDTVRFALDVLAILTVVPKIQLQLAESVDVLDEAGSAVSTVGISIILGVAEGEFFIHDAEIQKSALQIIINCVCGPDNRISSIGKFISGTPRRKLSQTPKSSEHTLAKMWNVVQSNNGIKVLLSLLSIKMPITDADQIRALACKALVGLSRSSTVRQIISKLPLFSSCQIQQLMKEPVLQDKRSDHVKFCKYAAELIERVSGKPLLIGTDVSLARLQKADVVAQSRISFPEKELLLLIRNHLISKGLGETATVLTREADLPMTAASHSSAFTPVTAAASPVSLPRTPRIANGIASRLGSHATVGASAPSAPPAHPPPRPPQGSLPLPGPSYAGNSPLIGRISFIRERPSPCNGRKIRVLRQKSDHGAYSQSPAIKKQLDRHLPSPPTLDSIITEYLREQHARCKNPVATCPPFSLFTPHQCPEPKQRRQAPINFTSRLNRRASFPKYGGVDGGCFDRHLIFSRFRPISVFREANEDESGFTCCAFSARERFLMLGTCTGQLKLYNVFSGQEEASYNCHNSAITHLEPSRDGSLLLTSATWSQPLSALWGMKSVFDMKHSFTEDHYVEFSKHSQDRVIGTKGDIAHIYDIQTGNKLLTLFNPDLANNYKRNCATFNPTDDLVLNDGVLWDVRSAQAIHKFDKFNMNISGVFHPNGLEVIINTEIWDLRTFHLLHTVPALDQCRVVFNHTGTVMYGAMLQADDEDDLLEERMKSPFGSSFRTFNATDYKPIATIDVKRNIFDLCTDTKDCYLAVIENQGSMDALNMDTVCRLYEVGRQRLAEDEDEEEDQEEEEQEEEDDDEDDDDTDDLDELDTDQLLEAELEEDDNNENAGEDGDNDFSPSDEELANLLEEGEEGEDEDSDADEEVELILGDTDSSDNSDLEDDIILSLNE.

Residues 141 to 499 (QPLRTYSTGL…STLEILNLED (359 aa)) are protein kinase-like. Ser202 and Ser254 each carry phosphoserine. The interval 241–275 (RLDSSHKTSSRVNSATKPEEGGLKKNKSAKHGDRE) is disordered. The Chromo domain occupies 561–592 (SYTHEQIVEMMEFLIEYGPAQLYWEPAEVFLK). Lys700 is subject to N6-acetyllysine. Ser827 bears the Phosphoserine mark. One can recognise a LisH domain in the interval 845–877 (PEKELLLLIRNHLISKGLGETATVLTREADLPM). A Phosphothreonine modification is found at Thr887. Phosphoserine is present on residues Ser894 and Ser897. 2 disordered regions span residues 916 to 946 (ATVGASAPSAPPAHPPPRPPQGSLPLPGPSY) and 977 to 999 (KSDHGAYSQSPAIKKQLDRHLPS). The segment covering 924–943 (SAPPAHPPPRPPQGSLPLPG) has biased composition (pro residues). Residues Ser978 and Ser999 each carry the phosphoserine modification. WD repeat units lie at residues 1090 to 1129 (EDESGFTCCAFSARERFLMLGTCTGQLKLYNVFSGQEEAS), 1132 to 1173 (CHNS…DMKH), 1175 to 1212 (FTEDHYVEFSKHSQDRVIGTKGDIAHIYDIQTGNKLLT), 1214 to 1246 (FNPDLANNYKRNCATFNPTDDLVLNDGVLWDVR), and 1247 to 1289 (SAQA…LLHT). The WD repeat-like region stretch occupies residues 1090–1289 (EDESGFTCCA…DLRTFHLLHT (200 aa)). Short sequence motifs (DWD box) lie at residues 1241–1248 (VLWDVRSA) and 1277–1284 (EIWDLRTF). A Phosphoserine modification is found at Ser1327. Residues 1392–1506 (RLAEDEDEEE…EDDIILSLNE (115 aa)) are disordered. Acidic residues-rich tracts occupy residues 1395–1482 (EDED…EEVE) and 1489–1500 (DSSDNSDLEDDI). The segment at 1417–1506 (DDDTDDLDEL…EDDIILSLNE (90 aa)) is interaction with NF2.

This sequence belongs to the VPRBP/DCAF1 family. Component of the DCX (DDB1-CUL4-X-box) E3 ubiquitin-protein ligase complex, named CUL4A-RBX1-DDB1-DCAF1/VPRBP complex. Interacts with DDB1; the interaction is direct. Also forms a ternary complex with DDA1 and DDB1. Interacts with NF2 (via FERM domain). Component of the EDVP complex, a E3 ligase complex containing DYRK2, EDD/UBR5, DDB1 and DCAF1. Interacts with DYRK2; the interaction is direct. Interacts with RAG1; the interaction is direct. Interacts with LLGL1 and LLGL2. Interacts with histone H3. Interacts with ESR1 and LATS1; probably recruited by LATS1 to promote ESR1 ubiquitination and ubiquitin-mediated proteasomal degradation. Directly interacts with TET1, TET2 and TET3 (via C-terminus). Interacts with CEP78; promoting DCAF1 localization to centrosomes. As to expression, widely expressed. Expressed in oocytes and zygotes (at protein level).

It is found in the cytoplasm. The protein localises to the nucleus. The protein resides in the cytoskeleton. Its subcellular location is the microtubule organizing center. It localises to the centrosome. The catalysed reaction is L-seryl-[protein] + ATP = O-phospho-L-seryl-[protein] + ADP + H(+). It carries out the reaction L-threonyl-[protein] + ATP = O-phospho-L-threonyl-[protein] + ADP + H(+). The protein operates within protein modification; protein ubiquitination. Acts both as a substrate recognition component of E3 ubiquitin-protein ligase complexes and as an atypical serine/threonine-protein kinase, playing key roles in various processes such as cell cycle, telomerase regulation and histone modification. Probable substrate-specific adapter of a DCX (DDB1-CUL4-X-box) E3 ubiquitin-protein ligase complex, named CUL4A-RBX1-DDB1-DCAF1/VPRBP complex, which mediates ubiquitination and proteasome-dependent degradation of proteins such as NF2. Involved in the turnover of methylated proteins: recognizes and binds methylated proteins via its chromo domain, leading to ubiquitination of target proteins by the RBX1-DDB1-DCAF1/VPRBP complex. The CUL4A-RBX1-DDB1-DCAF1/VPRBP complex is also involved in B-cell development: DCAF1 is recruited by RAG1 to ubiquitinate proteins, leading to limit error-prone repair during V(D)J recombination. Also part of the EDVP complex, an E3 ligase complex that mediates ubiquitination of proteins such as TERT, leading to TERT degradation and telomerase inhibition. The EDVP complex also mediates ubiquitination and degradation of CCP110. Also acts as an atypical serine/threonine-protein kinase that specifically mediates phosphorylation of 'Thr-120' of histone H2A (H2AT120ph) in a nucleosomal context, thereby repressing transcription. H2AT120ph is present in the regulatory region of many tumor suppresor genes, down-regulates their transcription and is present at high level in a number of tumors. Involved in JNK-mediated apoptosis during cell competition process via its interaction with LLGL1 and LLGL2. By acting on TET dioxygenses, essential for oocyte maintenance at the primordial follicle stage, hence essential for female fertility. The polypeptide is DDB1- and CUL4-associated factor 1 (Mus musculus (Mouse)).